A 149-amino-acid chain; its full sequence is 3-dehydroquinate dehydratase (149 aa).

Catalysis depends on Tyr-23, which acts as the Proton acceptor. Residues Asn-75, His-81, and Asp-88 each coordinate substrate. The active-site Proton donor is the His-101. Residues 102 to 103 and Arg-112 contribute to the substrate site; that span reads LS.

Belongs to the type-II 3-dehydroquinase family. In terms of assembly, homododecamer.

The enzyme catalyses 3-dehydroquinate = 3-dehydroshikimate + H2O. It participates in metabolic intermediate biosynthesis; chorismate biosynthesis; chorismate from D-erythrose 4-phosphate and phosphoenolpyruvate: step 3/7. Catalyzes a trans-dehydration via an enolate intermediate. This is 3-dehydroquinate dehydratase from Stenotrophomonas maltophilia (strain R551-3).